A 429-amino-acid polypeptide reads, in one-letter code: Enolase (429 aa).

Residue Q162 participates in (2R)-2-phosphoglycerate binding. The active-site Proton donor is the E204. The Mg(2+) site is built by D241, E288, and D315. 4 residues coordinate (2R)-2-phosphoglycerate: K340, R369, S370, and K391. Catalysis depends on K340, which acts as the Proton acceptor.

Belongs to the enolase family. Mg(2+) is required as a cofactor.

It is found in the cytoplasm. Its subcellular location is the secreted. It localises to the cell surface. The enzyme catalyses (2R)-2-phosphoglycerate = phosphoenolpyruvate + H2O. The protein operates within carbohydrate degradation; glycolysis; pyruvate from D-glyceraldehyde 3-phosphate: step 4/5. Its function is as follows. Catalyzes the reversible conversion of 2-phosphoglycerate (2-PG) into phosphoenolpyruvate (PEP). It is essential for the degradation of carbohydrates via glycolysis. The sequence is that of Enolase from Christiangramia forsetii (strain DSM 17595 / CGMCC 1.15422 / KT0803) (Gramella forsetii).